A 330-amino-acid polypeptide reads, in one-letter code: Clp protease adapter protein ClpF, chloroplastic (330 aa).

Residues 1–65 (MVQSQSLSTL…KSLKQRNLLR (65 aa)) constitute a chloroplast transit peptide. Residues 66–138 (VEARWPFQGG…VEEESIRLQE (73 aa)) form an NTD, required for CLPS1-binding region. Coiled coils occupy residues 112-139 (NLEQ…LQEG) and 175-195 (AAKL…VSAK). The UVR domain maps to 153-188 (GISIIRLRADLQNAIDSEDYGLAAKLRDEISKLEAE). The tract at residues 203–310 (EYAFRLGQKL…TAGDFIPVKQ (108 aa)) is yccV-like.

As to quaternary structure, binds to CLPC1 and CLPC2. Interacts with ClpS1; this interaction stimulates their association with ClpC. Associates with the Clp substrate HEMA1 (GluTR). Expressed constitutively in photosynthetic tissues such as leaves, stems and flowers, and, at low levels, in siliques.

It localises to the plastid. It is found in the chloroplast. Clp protease adapter that facilitates CLPS1 recruitment to ClpC chaperones thus forming a binary adapter for selective substrate recognition and delivery to plastid Clp protease system (CLPC). The sequence is that of Clp protease adapter protein ClpF, chloroplastic from Arabidopsis thaliana (Mouse-ear cress).